A 330-amino-acid polypeptide reads, in one-letter code: Aspartate--ammonia ligase (330 aa).

It belongs to the class-II aminoacyl-tRNA synthetase family. AsnA subfamily.

It localises to the cytoplasm. The enzyme catalyses L-aspartate + NH4(+) + ATP = L-asparagine + AMP + diphosphate + H(+). The protein operates within amino-acid biosynthesis; L-asparagine biosynthesis; L-asparagine from L-aspartate (ammonia route): step 1/1. The protein is Aspartate--ammonia ligase of Streptococcus thermophilus (strain CNRZ 1066).